Here is a 153-residue protein sequence, read N- to C-terminus: Deoxyuridine 5'-triphosphate nucleotidohydrolase (153 aa).

Residues 71 to 73, Asn84, 88 to 90, and Lys98 each bind substrate; these read RSG and TID.

The protein belongs to the dUTPase family. The cofactor is Mg(2+).

The catalysed reaction is dUTP + H2O = dUMP + diphosphate + H(+). It functions in the pathway pyrimidine metabolism; dUMP biosynthesis; dUMP from dCTP (dUTP route): step 2/2. This enzyme is involved in nucleotide metabolism: it produces dUMP, the immediate precursor of thymidine nucleotides and it decreases the intracellular concentration of dUTP so that uracil cannot be incorporated into DNA. This Wolbachia sp. subsp. Drosophila simulans (strain wRi) protein is Deoxyuridine 5'-triphosphate nucleotidohydrolase.